A 238-amino-acid chain; its full sequence is Ribonuclease PH (238 aa).

Phosphate is bound by residues Arg-86 and 124-126; that span reads GTR.

Belongs to the RNase PH family. Homohexameric ring arranged as a trimer of dimers.

It carries out the reaction tRNA(n+1) + phosphate = tRNA(n) + a ribonucleoside 5'-diphosphate. Functionally, phosphorolytic 3'-5' exoribonuclease that plays an important role in tRNA 3'-end maturation. Removes nucleotide residues following the 3'-CCA terminus of tRNAs; can also add nucleotides to the ends of RNA molecules by using nucleoside diphosphates as substrates, but this may not be physiologically important. Probably plays a role in initiation of 16S rRNA degradation (leading to ribosome degradation) during starvation. The polypeptide is Ribonuclease PH (Nitrosospira multiformis (strain ATCC 25196 / NCIMB 11849 / C 71)).